Consider the following 90-residue polypeptide: MLCAIYRSPKRDQTYLYIEKKDDFSRVPAELLASFGKPQFAMLLSLNERKSLATADIEKVKSALVEQGFYLQVPPPPESLLKMHLGETKA.

The region spanning 1-85 (MLCAIYRSPK…PPESLLKMHL (85 aa)) is the YcgL domain.

The sequence is that of YcgL domain-containing protein YE2368 from Yersinia enterocolitica serotype O:8 / biotype 1B (strain NCTC 13174 / 8081).